Here is a 319-residue protein sequence, read N- to C-terminus: Taste receptor type 2 member 7 (319 aa).

The Extracellular portion of the chain corresponds to 1–9 (MADKVQTTL). The chain crosses the membrane as a helical span at residues 10 to 30 (LFLAVGEFSVGILGNAFIGLV). Residues 31–55 (NCMDWVKKRKIASIDLILTSLAISR) are Cytoplasmic-facing. The helical transmembrane segment at 56 to 76 (ICLLCVILLDCFILVLYPDVY) threads the bilayer. The Extracellular segment spans residues 77 to 94 (ATGKEMRIIDFFWTLTNH). The chain crosses the membrane as a helical span at residues 95–115 (LSIWFATCLSIYYXFRIANFF). Residues 116–128 (HPLFLWMKWRIDR) lie on the Cytoplasmic side of the membrane. The chain crosses the membrane as a helical span at residues 129-149 (VISWILLGCVVLSVFISLPAT). Over 150–187 (ENLNADFRFCVKAKRKTNLTWSCRVNKTQHASTKLFLN) the chain is Extracellular. N-linked (GlcNAc...) asparagine glycans are attached at residues Asn167 and Asn175. A helical membrane pass occupies residues 188–208 (LATLLPFCVCLMSFFLLILSL). Residues 209–235 (RRHIRRMQLSATGCRDPSTEAHVRALK) lie on the Cytoplasmic side of the membrane. A helical transmembrane segment spans residues 236–256 (AVISFLLLFIAYYLSFLVATS). The Extracellular portion of the chain corresponds to 257–266 (SYFMPETELA). The helical transmembrane segment at 267 to 287 (VIFGESIALIYPSSHSFILIL) threads the bilayer. The Cytoplasmic portion of the chain corresponds to 288 to 319 (GNNKLRHASLKVIWKVMSILKGRKFQQHKQIG).

Belongs to the G-protein coupled receptor T2R family.

It localises to the membrane. Its function is as follows. Gustducin-coupled receptor implicated in the perception of bitter compounds in the oral cavity and the gastrointestinal tract. Signals through PLCB2 and the calcium-regulated cation channel TRPM5. In Pan troglodytes (Chimpanzee), this protein is Taste receptor type 2 member 7 (TAS2R7).